The chain runs to 275 residues: Membrane protein insertase YidC (275 aa).

Positions 1–22 (MKKYKRLLLMAGLVTLVFVLSA) are cleaved as a signal peptide. The N-palmitoyl cysteine moiety is linked to residue C23. C23 carries S-diacylglycerol cysteine lipidation. 4 helical membrane-spanning segments follow: residues 53–73 (LGGS…IILL), 127–147 (YIGC…YQAI), 169–189 (YLIL…LSSM), and 206–226 (PAMI…YWVV). Residues 249-266 (EEAARQAKARERALERAK) show a composition bias toward basic and acidic residues. Positions 249-275 (EEAARQAKARERALERAKSPKKKGKKK) are disordered.

This sequence belongs to the OXA1/ALB3/YidC family. Type 2 subfamily.

It localises to the cell membrane. In terms of biological role, required for the insertion and/or proper folding and/or complex formation of integral membrane proteins into the membrane. Involved in integration of membrane proteins that insert both dependently and independently of the Sec translocase complex, as well as at least some lipoproteins. This is Membrane protein insertase YidC from Enterococcus faecalis (strain ATCC 700802 / V583).